The primary structure comprises 85 residues: Large ribosomal subunit protein bL27 (85 aa).

Belongs to the bacterial ribosomal protein bL27 family.

The protein is Large ribosomal subunit protein bL27 of Persephonella marina (strain DSM 14350 / EX-H1).